The following is a 329-amino-acid chain: Ketol-acid reductoisomerase (NADP(+)) (329 aa).

Residues 2–182 (TQLFYDTDAD…GGTRAGILET (181 aa)) form the KARI N-terminal Rossmann domain. NADP(+) contacts are provided by residues 25–28 (YGSQ), Ser-51, Ser-53, and 83–86 (DEFQ). Residue His-108 is part of the active site. Gly-134 lines the NADP(+) pocket. A KARI C-terminal knotted domain is found at 183–328 (NFKEETETDL…KGLRSMFSWL (146 aa)). 4 residues coordinate Mg(2+): Asp-191, Glu-195, Glu-227, and Glu-231. A substrate-binding site is contributed by Ser-252.

Belongs to the ketol-acid reductoisomerase family. Mg(2+) serves as cofactor.

It carries out the reaction (2R)-2,3-dihydroxy-3-methylbutanoate + NADP(+) = (2S)-2-acetolactate + NADPH + H(+). The enzyme catalyses (2R,3R)-2,3-dihydroxy-3-methylpentanoate + NADP(+) = (S)-2-ethyl-2-hydroxy-3-oxobutanoate + NADPH + H(+). It functions in the pathway amino-acid biosynthesis; L-isoleucine biosynthesis; L-isoleucine from 2-oxobutanoate: step 2/4. It participates in amino-acid biosynthesis; L-valine biosynthesis; L-valine from pyruvate: step 2/4. Involved in the biosynthesis of branched-chain amino acids (BCAA). Catalyzes an alkyl-migration followed by a ketol-acid reduction of (S)-2-acetolactate (S2AL) to yield (R)-2,3-dihydroxy-isovalerate. In the isomerase reaction, S2AL is rearranged via a Mg-dependent methyl migration to produce 3-hydroxy-3-methyl-2-ketobutyrate (HMKB). In the reductase reaction, this 2-ketoacid undergoes a metal-dependent reduction by NADPH to yield (R)-2,3-dihydroxy-isovalerate. The protein is Ketol-acid reductoisomerase (NADP(+)) of Prochlorococcus marinus (strain MIT 9215).